The sequence spans 70 residues: Large ribosomal subunit protein bL32 (70 aa).

Residues 1–19 (MAVPKKKTSPSRRGMRRSH) are compositionally biased toward basic residues. The segment at 1–21 (MAVPKKKTSPSRRGMRRSHQA) is disordered.

The protein belongs to the bacterial ribosomal protein bL32 family.

The sequence is that of Large ribosomal subunit protein bL32 from Granulibacter bethesdensis (strain ATCC BAA-1260 / CGDNIH1).